A 238-amino-acid chain; its full sequence is Probable transcriptional regulatory protein VIBHAR_07036 (238 aa).

It belongs to the TACO1 family.

It is found in the cytoplasm. The chain is Probable transcriptional regulatory protein VIBHAR_07036 from Vibrio campbellii (strain ATCC BAA-1116).